A 166-amino-acid chain; its full sequence is PTS system glucose-specific EIIA component (166 aa).

The PTS EIIA type-1 domain occupies 34–138; it reads DPVFAQKMMG…SVISPIIITN (105 aa). Zn(2+) contacts are provided by histidine 71 and histidine 86. The active-site Tele-phosphohistidine intermediate; for EIIA activity is the histidine 86. Residue histidine 86 is modified to Phosphohistidine; by HPr.

As to quaternary structure, heterodimer with glycerol kinase (glpk). Requires Zn(2+) as cofactor.

The protein localises to the cytoplasm. In terms of biological role, the phosphoenolpyruvate-dependent sugar phosphotransferase system (sugar PTS), a major carbohydrate active transport system, catalyzes the phosphorylation of incoming sugar substrates concomitantly with their translocation across the cell membrane. The enzyme II complex composed of PtsG and Crr is involved in glucose transport. The protein is PTS system glucose-specific EIIA component (crr) of Staphylococcus aureus (strain MRSA252).